The sequence spans 323 residues: Acetyl esterase (323 aa).

The short motif at 91–93 (HGG) is the Involved in the stabilization of the negatively charged intermediate by the formation of the oxyanion hole element. Active-site residues include S165, D262, and H292.

This sequence belongs to the 'GDXG' lipolytic enzyme family. As to quaternary structure, homodimer. Interacts with MalT and MelA.

The protein resides in the cytoplasm. Functionally, displays esterase activity towards short chain fatty esters (acyl chain length of up to 8 carbons). Able to hydrolyze triacetylglycerol (triacetin) and tributyrylglycerol (tributyrin), but not trioleylglycerol (triolein) or cholesterol oleate. Negatively regulates MalT activity by antagonizing maltotriose binding. Inhibits MelA galactosidase activity. This Salmonella schwarzengrund (strain CVM19633) protein is Acetyl esterase.